We begin with the raw amino-acid sequence, 485 residues long: Trk system potassium uptake protein TrkG (485 aa).

The Cytoplasmic portion of the chain corresponds to 1–5 (MNTSH). A helical membrane pass occupies residues 6–32 (VRVVTHMCGFLVWLYSLSMLPPMVVAL). Topologically, residues 33-38 (FYKEKS) are periplasmic. Residues 39 to 60 (LFVFFITFVIFFCIGGGAWYTT) form a helical membrane-spanning segment. Residues 61–68 (KKSGIQLR) lie on the Cytoplasmic side of the membrane. A helical membrane pass occupies residues 69–93 (TRDGFIIIVMFWILFSVISAFPLWI). The segment at residues 101–112 (FIDALFEGVSGI) is an intramembrane region (helical; Pore-forming). An intramembrane segment occupies 113–118 (TTTGAT). Residues 113–118 (TTTGAT) are selectivity filter part 1. Residues threonine 114 and threonine 115 each coordinate K(+). Topologically, residues 119–127 (VIDDVSSLP) are periplasmic. Residues 128-153 (RAYLYYRSQLNFIGGLGVIVLAVAVL) traverse the membrane as a helical segment. Residues 154–180 (PLLGIGGAKLYQSEMPGPFKDDKLTPR) are Cytoplasmic-facing. The helical transmembrane segment at 181–205 (LADTSRTLWITYSLLGIACIVCYRL) threads the bilayer. At 206–208 (AGM) the chain is on the periplasmic side. An intramembrane region is located at residue proline 209. An intramembrane region (helical; Pore-forming) is located at residues 210-221 (LFDAICHGISTV). The stretch at 222 to 227 (SLGGFS) is an intramembrane region. Residues 222–227 (SLGGFS) form a selectivity filter part 2 region. Residues leucine 223 and glycine 224 each coordinate K(+). Over 228–237 (THSESIGYFN) the chain is Periplasmic. Residues 238-253 (NYLVELVAGSFSLLSA) constitute an intramembrane region (helical). Residues 277–297 (LRFFLLIALGVIIVTSFQVWH) form a helical membrane-spanning segment. An intramembrane region (helical; Pore-forming) is located at residues 303–318 (LHGSFIHSFFLASSML). An intramembrane segment occupies 319 to 324 (TDNGLA). The selectivity filter part 3 stretch occupies residues 319 to 324 (TDNGLA). The K(+) site is built by aspartate 320 and asparagine 321. Residues 325 to 332 (TQDYASWP) are Periplasmic-facing. An intramembrane region (helical) is located at residues 333–344 (THTIVFLLLSSF). An intramembrane region (note=Loop between two helices) is located at residues 345–357 (FGGCIGSTCGGIK). The helical transmembrane segment at 392-419 (TDRVMRSVWSFFFLYTLFTVFFILVLNG) threads the bilayer. Residues 420 to 421 (MG) lie on the Periplasmic side of the membrane. The stretch at 422–423 (YD) is an intramembrane region. An intramembrane region (helical; Pore-forming) is located at residues 424–434 (FLTSFATVAAC). An intramembrane segment occupies 435–441 (INNMGLG). Positions 436–441 (NNMGLG) are selectivity filter part 4. K(+)-binding residues include asparagine 437 and methionine 438. At 442–453 (FGATASSFGVLN) the chain is on the periplasmic side. Residues 454–465 (DIAKCLMCIAMI) constitute an intramembrane region (helical).

Belongs to the TrkH potassium transport family.

It localises to the cell inner membrane. Low-affinity potassium transport system. Interacts with Trk system potassium uptake protein TrkA. Requires TrkE (sapD) for maximal transport activity, low activity is seen in its absence; no further stimulation is seen with SapF. Transport in the absence of SapD is dependent on a high membrane potential and a high cytoplasmic ATP concentration, suggesting this protein may be able to interact with other ATP-binding proteins. Can transport potassium and rubidium. In Escherichia coli (strain K12), this protein is Trk system potassium uptake protein TrkG (trkG).